Reading from the N-terminus, the 378-residue chain is Ribosomal RNA large subunit methyltransferase G (378 aa).

Belongs to the methyltransferase superfamily. RlmG family.

The protein resides in the cytoplasm. The catalysed reaction is guanosine(1835) in 23S rRNA + S-adenosyl-L-methionine = N(2)-methylguanosine(1835) in 23S rRNA + S-adenosyl-L-homocysteine + H(+). Specifically methylates the guanine in position 1835 (m2G1835) of 23S rRNA. The protein is Ribosomal RNA large subunit methyltransferase G of Escherichia coli O1:K1 / APEC.